The sequence spans 205 residues: Imidazole glycerol phosphate synthase subunit HisH (205 aa).

Residues 3-205 form the Glutamine amidotransferase type-1 domain; it reads KIGLIDYGMG…LLRRWIKSIQ (203 aa). The active-site Nucleophile is the Cys-81. Residues His-185 and Glu-187 contribute to the active site.

Heterodimer of HisH and HisF.

It localises to the cytoplasm. It carries out the reaction 5-[(5-phospho-1-deoxy-D-ribulos-1-ylimino)methylamino]-1-(5-phospho-beta-D-ribosyl)imidazole-4-carboxamide + L-glutamine = D-erythro-1-(imidazol-4-yl)glycerol 3-phosphate + 5-amino-1-(5-phospho-beta-D-ribosyl)imidazole-4-carboxamide + L-glutamate + H(+). The enzyme catalyses L-glutamine + H2O = L-glutamate + NH4(+). The protein operates within amino-acid biosynthesis; L-histidine biosynthesis; L-histidine from 5-phospho-alpha-D-ribose 1-diphosphate: step 5/9. In terms of biological role, IGPS catalyzes the conversion of PRFAR and glutamine to IGP, AICAR and glutamate. The HisH subunit catalyzes the hydrolysis of glutamine to glutamate and ammonia as part of the synthesis of IGP and AICAR. The resulting ammonia molecule is channeled to the active site of HisF. This Prochlorococcus marinus subsp. pastoris (strain CCMP1986 / NIES-2087 / MED4) protein is Imidazole glycerol phosphate synthase subunit HisH.